The chain runs to 156 residues: MTIYFYKVWQPYGCFSNFSPHGIHIQDTYWATVEHYYQAQKFVGSKDAAIIPLIHAAATPEEAAALGRCSTRQLRRDWDLVKTQIMREAVLKKFLTHADIREVLLKTGDELLVENSPTDSFWGCGANKAGLNHLGKTLMSVREEIRNLLSLTGIYE.

It belongs to the YbiA family.

The enzyme catalyses 2,5-diamino-6-hydroxy-4-(5-phosphoribosylamino)-pyrimidine + H2O = 2,5,6-triamino-4-hydroxypyrimidine + D-ribose 5-phosphate. It carries out the reaction 5-amino-6-(5-phospho-D-ribosylamino)uracil + H2O = 5,6-diaminouracil + D-ribose 5-phosphate. Catalyzes the hydrolysis of the N-glycosidic bond in the first two intermediates of riboflavin biosynthesis, which are highly reactive metabolites, yielding relatively innocuous products. Thus, can divert a surplus of harmful intermediates into relatively harmless products and pre-empt the damage these intermediates would otherwise do. May act on other substrates in vivo. Has no activity against GTP, nucleoside monophosphates or ADP-ribose. This chain is N-glycosidase Npun_R5314, found in Nostoc punctiforme (strain ATCC 29133 / PCC 73102).